Consider the following 321-residue polypeptide: Aspartate carbamoyltransferase catalytic subunit (321 aa).

Carbamoyl phosphate contacts are provided by R64 and T65. K92 is a binding site for L-aspartate. Residues R114, H144, and Q147 each coordinate carbamoyl phosphate. L-aspartate is bound by residues R177 and R232. The carbamoyl phosphate site is built by G273 and P274.

The protein belongs to the aspartate/ornithine carbamoyltransferase superfamily. ATCase family. As to quaternary structure, heterododecamer (2C3:3R2) of six catalytic PyrB chains organized as two trimers (C3), and six regulatory PyrI chains organized as three dimers (R2).

It carries out the reaction carbamoyl phosphate + L-aspartate = N-carbamoyl-L-aspartate + phosphate + H(+). It functions in the pathway pyrimidine metabolism; UMP biosynthesis via de novo pathway; (S)-dihydroorotate from bicarbonate: step 2/3. Its function is as follows. Catalyzes the condensation of carbamoyl phosphate and aspartate to form carbamoyl aspartate and inorganic phosphate, the committed step in the de novo pyrimidine nucleotide biosynthesis pathway. In Alkalilimnicola ehrlichii (strain ATCC BAA-1101 / DSM 17681 / MLHE-1), this protein is Aspartate carbamoyltransferase catalytic subunit.